The primary structure comprises 206 residues: 3-demethoxyubiquinol 3-hydroxylase (206 aa).

Fe cation contacts are provided by glutamate 55, glutamate 85, histidine 88, glutamate 137, glutamate 169, and histidine 172.

This sequence belongs to the COQ7 family. The cofactor is Fe cation.

Its subcellular location is the cell membrane. It catalyses the reaction a 5-methoxy-2-methyl-3-(all-trans-polyprenyl)benzene-1,4-diol + AH2 + O2 = a 3-demethylubiquinol + A + H2O. The protein operates within cofactor biosynthesis; ubiquinone biosynthesis. In terms of biological role, catalyzes the hydroxylation of 2-nonaprenyl-3-methyl-6-methoxy-1,4-benzoquinol during ubiquinone biosynthesis. This is 3-demethoxyubiquinol 3-hydroxylase from Aromatoleum aromaticum (strain DSM 19018 / LMG 30748 / EbN1) (Azoarcus sp. (strain EbN1)).